The sequence spans 38 residues: Defensin D7 (38 aa).

Belongs to the DEFL family. Group IV subfamily. Distributed in the epidermal cell layer of leaves and in the subepidermal layer region of stems. Not in roots.

It localises to the secreted. It is found in the cell wall. Antimicrobial peptide. Active against Fusarium spp., Gram-positive and Gram-negative bacterial pathogens. The chain is Defensin D7 from Spinacia oleracea (Spinach).